Here is a 240-residue protein sequence, read N- to C-terminus: UDP-2,3-diacylglucosamine hydrolase (240 aa).

5 residues coordinate Mn(2+): Asp7, His9, Asp40, Asn78, and His113. Residue 78-79 (NR) participates in substrate binding. Substrate is bound by residues Asp121, Ser159, Thr163, Lys166, and His194. Positions 194 and 196 each coordinate Mn(2+).

Belongs to the LpxH family. It depends on Mn(2+) as a cofactor.

Its subcellular location is the cell inner membrane. The enzyme catalyses UDP-2-N,3-O-bis[(3R)-3-hydroxytetradecanoyl]-alpha-D-glucosamine + H2O = 2-N,3-O-bis[(3R)-3-hydroxytetradecanoyl]-alpha-D-glucosaminyl 1-phosphate + UMP + 2 H(+). It functions in the pathway glycolipid biosynthesis; lipid IV(A) biosynthesis; lipid IV(A) from (3R)-3-hydroxytetradecanoyl-[acyl-carrier-protein] and UDP-N-acetyl-alpha-D-glucosamine: step 4/6. Its function is as follows. Hydrolyzes the pyrophosphate bond of UDP-2,3-diacylglucosamine to yield 2,3-diacylglucosamine 1-phosphate (lipid X) and UMP by catalyzing the attack of water at the alpha-P atom. Involved in the biosynthesis of lipid A, a phosphorylated glycolipid that anchors the lipopolysaccharide to the outer membrane of the cell. The polypeptide is UDP-2,3-diacylglucosamine hydrolase (Pseudomonas entomophila (strain L48)).